The following is a 739-amino-acid chain: Copalyl diphosphate synthase 1 (739 aa).

K154 is a substrate binding site. Residues D287 and D289 each coordinate Mg(2+). A DXDD motif motif is present at residues 287-290; that stretch reads DADD. K373 is a substrate binding site.

This sequence belongs to the terpene synthase family. Mg(2+) is required as a cofactor.

The catalysed reaction is (2E,6E,10E)-geranylgeranyl diphosphate = (+)-copalyl diphosphate. It functions in the pathway secondary metabolite biosynthesis; terpenoid biosynthesis. Functionally, monofunctional diterpene synthase converting geranylgeranyl diphosphate to copalyl diphosphate. The chain is Copalyl diphosphate synthase 1 (CPS1) from Selaginella moellendorffii (Spikemoss).